Consider the following 140-residue polypeptide: Myelodysplastic syndrome 2 translocation-associated protein (140 aa).

Highly expressed in peripheral blood leukocytes, spleen, thymus, kidney, pancreas and lung.

This is Myelodysplastic syndrome 2 translocation-associated protein (MDS2) from Homo sapiens (Human).